The sequence spans 517 residues: Protein disulfide-isomerase EUG1 (517 aa).

The signal sequence occupies residues 1–29 (MQVTTRFISAIVSFCLFASFTLAENSARA). Residues 30-141 (TPGSDLLVLT…ITQYMIQLYE (112 aa)) enclose the Thioredoxin 1 domain. 5 N-linked (GlcNAc...) asparagine glycosylation sites follow: Asn-159, Asn-174, Asn-207, Asn-293, and Asn-462. The region spanning 355-487 (YREGTAKPIV…VFEFIKESGT (133 aa)) is the Thioredoxin 2 domain. Positions 514-517 (HDEL) match the Prevents secretion from ER motif.

This sequence belongs to the protein disulfide isomerase family. In terms of assembly, interacts with EPS1. May have O-linked mannose residues.

The protein resides in the endoplasmic reticulum lumen. The catalysed reaction is Catalyzes the rearrangement of -S-S- bonds in proteins.. Functionally, probably interacts with nascent polypeptides in the endoplasmic reticulum. It is an essential gene only in the absence of PDI. Its native disulfide isomerase activity is very low. This Saccharomyces cerevisiae (strain ATCC 204508 / S288c) (Baker's yeast) protein is Protein disulfide-isomerase EUG1 (EUG1).